A 614-amino-acid chain; its full sequence is Baeyer-Villiger monooxygenase peniC (614 aa).

FAD contacts are provided by residues glutamate 99, 107-110, aspartate 119, and tyrosine 125; that span reads TWHW. Residues 255 to 261, 278 to 279, and 398 to 399 each bind NADP(+); these read TGASGVQ, RT, and KR.

The protein belongs to the FAD-binding monooxygenase family. FAD serves as cofactor.

The catalysed reaction is gamma-lactone-2-keto[5.5.5.5]fenestrane + NADPH + O2 + H(+) = penifulvin A + NADP(+) + H2O. It participates in secondary metabolite biosynthesis; terpenoid biosynthesis. In terms of biological role, baeyer-Villiger monooxygenase; part of the gene cluster that mediates the biosynthesis of penifulvin A, a potent insecticidal sesquiterpene that features a [5.5.5.6]dioxafenestrane ring. Within the pathway, peniC is responsible for the final regioselective Baeyer-Villiger oxidation of gamma-lactone-2-keto[5.5.5.5]fenestran between C1 and C2 to form the delta-lactone moiety of penifulvin A. The first step of the pathway is performed by the sesquiterpene cyclase peniA that generates the angular triquinane scaffold silphinene via cyclization of the linear farnesyl pyrophosphate (FPP). The cytochrome P450 monooxygenase peniB and the flavin-dependent monooxygenase peniC then catalyze a series of oxidation reactions to transform silphinene into penifulvin A. This chain is Baeyer-Villiger monooxygenase peniC, found in Penicillium patulum (Penicillium griseofulvum).